A 1592-amino-acid chain; its full sequence is Laminin subunit gamma-1 (1592 aa).

An N-terminal signal peptide occupies residues 1 to 19 (MRAPVLAVLAVLLLGTVRA). One can recognise a Laminin N-terminal domain in the interval 29-268 (SPQRCMPEFV…AISDFAVGGR (240 aa)). N-linked (GlcNAc...) asparagine glycosylation is found at N43 and N117. Disulfide bonds link C269–C278, C271–C288, C290–C299, C302–C322, C325–C334, C327–C350, C353–C362, C365–C378, C381–C393, C383–C399, C401–C410, C413–C425, C428–C439, C430–C446, C448–C457, and C460–C475. Laminin EGF-like domains are found at residues 269–324 (CKCN…ECLP), 325–380 (CNCN…PCHA), 381–427 (CQCN…GCRP), and 428–477 (CACN…GCTP). Residues 504–672 (SGVEGWTAQQ…AGPSAPWVEI (169 aa)) form the Laminin IV type A domain. 2 N-linked (GlcNAc...) asparagine glycosylation sites follow: N559 and N633. Intrachain disulfides connect C707/C716, C709/C723, C725/C734, C737/C753, C756/C764, C758/C775, C778/C787, C790/C808, C811/C825, C813/C832, C835/C844, C847/C864, C867/C881, C869/C888, C890/C899, C902/C915, C918/C930, C920/C937, C939/C948, C951/C963, C966/C978, C968/C984, C986/C995, and C998/C1011. Laminin EGF-like domains lie at 707–755 (CTCN…DCQP), 756–810 (CPCP…PCRI), 811–866 (CECS…KCRA), 867–917 (CSCN…GCER), 918–965 (CDCH…GCKP), and 966–1013 (CDCD…GCQE). N-linked (GlcNAc...) asparagine glycosylation is found at N1005, N1041, N1048, N1090, N1144, N1158, N1188, N1206, N1253, N1363, and N1386. A domain II and I region spans residues 1013-1592 (ECPACYRLVK…CYNTPIIEKP (580 aa)). Residues 1018-1477 (YRLVKDKVNE…DEKMAEMASN (460 aa)) are a coiled coil. Over residues 1456-1472 (NQLKKKQAEAESDEKMA) the composition is skewed to basic and acidic residues. The tract at residues 1456-1489 (NQLKKKQAEAESDEKMAEMASNATKDAESNANNS) is disordered. Residues 1476-1489 (SNATKDAESNANNS) show a composition bias toward polar residues. 2 N-linked (GlcNAc...) asparagine glycosylation sites follow: N1477 and N1487. Positions 1515–1579 (VGQLTVLEKT…ANLEDIKNTL (65 aa)) form a coiled coil.

Laminin is a complex glycoprotein, consisting of three different polypeptide chains (alpha, beta, gamma), which are bound to each other by disulfide bonds into a cross-shaped molecule comprising one long and three short arms with globules at each end.

The protein localises to the secreted. It is found in the extracellular space. Its subcellular location is the extracellular matrix. The protein resides in the basement membrane. Functionally, binding to cells via a high affinity receptor, laminin is thought to mediate the attachment, migration and organization of cells into tissues during embryonic development by interacting with other extracellular matrix components. The chain is Laminin subunit gamma-1 (lamc1) from Xenopus tropicalis (Western clawed frog).